A 260-amino-acid polypeptide reads, in one-letter code: Snake venom serine protease Dav-X (260 aa).

Residues M1–A18 form the signal peptide. Positions Q19 to L24 are excised as a propeptide. The region spanning V25 to A251 is the Peptidase S1 domain. Intrachain disulfides connect C31–C165, C52–C68, C102–C258, C144–C212, C176–C191, and C202–C227. Catalysis depends on H67, which acts as the Charge relay system. Residue N81 is glycosylated (N-linked (GlcNAc...) asparagine). The active-site Charge relay system is D112. N124 and N172 each carry an N-linked (GlcNAc...) asparagine glycan. S206 acts as the Charge relay system in catalysis. N-linked (GlcNAc...) asparagine glycosylation is present at N241.

It belongs to the peptidase S1 family. Snake venom subfamily. As to quaternary structure, monomer. As to expression, expressed by the venom gland.

It localises to the secreted. Snake venom serine protease that may act in the hemostasis system of the prey. This chain is Snake venom serine protease Dav-X, found in Deinagkistrodon acutus (Hundred-pace snake).